The following is a 1128-amino-acid chain: MQGAQTSEDNLGSQSQPGPCGYIYFYPLATYPLREVATLGTGYAGHRCLTVPLLCGITVEPGFSINVKALHRRPDPNCGLLRATSYHRDIYVFHNAHMVPPIFEGPGLEALCGETREVFGYDAYSALPRESSKPGDFFPEGLDPSAYLGAVAITEAFKERLYSGNLVAIPSLKQEVAVGQSASVRVPLYDKEVFPEGVPQLRQFYNSDLSRCMHEALYTGLAQALRVRRVGKLVELLEKQSLQDQAKVAKVAPLKEFPASTISHPDSGALMIVDSAACELAVSYAPAMLEASHETPASLNYDSWPLFADCEGPEARVAALHRYNASLAPHVSTQIFATNSVLYVSGVSKSTGQGKESLFNSFYMTHGLGTLQEGTWDPCRRPCFSGWGGPDVTGTNGPGNYAVEHLVYAASFSPNLLARYAYYLQFCQGQKSSLTPVPETGSYVAGAAASPMCSLCEGRAPAVCLNTLFFRLRDRFPPVMSTQRRDPYVISGASGSYNETDFLGNFLNFIDKEDDGQRPDDEPRYTYWQLNQNLLERLSRLGIDAEGKLEKEPHGPRDFVKMFKDVDAAVDAEVVQFMNSMAKNNITYKDLVKSCYHVMQYSCNPFAQPACPIFTQLFYRSLLTILQDISLPICMCYENDNPGLGQSPPEWLKGHYQTLCTNFRSLAIDKGVLTAKEAKVVHGEPTCDLPDLDAALQGRVYGRRLPVRMSKVLMLCPRNIKIKNRVVFTGENAALQNSFIKSTTRRENYIINGPYMKFLNTYHKTLFPDTKLSSLYLWHNFSRRRSVPVPSGASAEEYSDLALFVDGGSRAHEESNVIDVVPGNLVTYAKQRLNNAILKACGQTQFYISLIQGLVPRTQSVPARDYPHVLGTRAVESAAAYAEATSSLTATTVVCAATDCLSQVCKARPVVTLPVTINKYTGVNGNNQIFQAGNLGYFMGRGVDRNLLQAPGAGLRKQAGGSSMRKKFVFATPTLGLTVKRRTQAATTYEIENIRAGLEAIISQKQEEDCVFDVVCNLVDAMGEACASLTRDDAEYLLGRFSVLADSVLETLATIASSGIEWTAEAARDFLEGVWGGPGAAQDNFISVAEPVSTASQASAGLLLGGGGQGSGGRRKRRLATVLPGLEV.

Residues 1104–1128 (LGGGGQGSGGRRKRRLATVLPGLEV) are required for nuclear localization.

Belongs to the herpesviridae major DNA-binding protein family. In terms of assembly, homooligomers. Forms double-helical filaments necessary for the formation of replication compartments within the host nucleus. Interacts with the origin-binding protein. Interacts with the helicase primase complex; this interaction stimulates primer synthesis activity of the helicase-primase complex. Interacts with the DNA polymerase. Interacts with the alkaline exonuclease; this interaction increases its nuclease processivity.

The protein resides in the virion tegument. It is found in the host nucleus. Its function is as follows. Plays several crucial roles in viral infection. Participates in the opening of the viral DNA origin to initiate replication by interacting with the origin-binding protein. May disrupt loops, hairpins and other secondary structures present on ssDNA to reduce and eliminate pausing of viral DNA polymerase at specific sites during elongation. Promotes viral DNA recombination by performing strand-transfer, characterized by the ability to transfer a DNA strand from a linear duplex to a complementary single-stranded DNA circle. Can also catalyze the renaturation of complementary single strands. Additionally, reorganizes the host cell nucleus, leading to the formation of prereplicative sites and replication compartments. This process is driven by the protein which can form double-helical filaments in the absence of DNA. This chain is Major DNA-binding protein, found in Homo sapiens (Human).